The following is a 109-amino-acid chain: U4-lycotoxin-Ls1d (109 aa).

Positions 1–22 are cleaved as a signal peptide; sequence MKVLVLFSVLFLTLFSYSSTEA. Residues 23–44 constitute a propeptide that is removed on maturation; sequence MDEFDSDAEEDMLSLMANEQVR. The segment at 45-88 is knottin domain; that stretch reads AKACTPRLHDCSHDRHSCCRGELFKDVCYCFYPEGEDKTEVCSC. Cystine bridges form between Cys48–Cys63, Cys55–Cys72, Cys62–Cys88, and Cys74–Cys86. Positions 89–108 are linear cationic cytotoxin domain; that stretch reads QQPKSHKYIEKVVDKARTVV.

It belongs to the neurotoxin 19 (CSTX) family. 05 (U4-Lctx) subfamily. Expressed by the venom gland.

The protein localises to the secreted. Functionally, enhances the high-affinity desensitization of human P2RX3 purinoceptors. In Lycosa singoriensis (Wolf spider), this protein is U4-lycotoxin-Ls1d.